The following is a 937-amino-acid chain: Chromatin assembly factor 1 subunit A (937 aa).

The segment at 21-69 (RLPFKRLNPVPKEKHDAEAEGKKGKCSKSGLGQSKDSSTDTLHASTDNM) is disordered. Over residues 31-43 (PKEKHDAEAEGKK) the composition is skewed to basic and acidic residues. A compositionally biased stretch (polar residues) spans 59–69 (TDTLHASTDNM). Positions 213–226 (FEGKMPVVLLEDIM) match the PxVxL motif motif. 5 disordered regions span residues 250 to 386 (SHEG…EKRK), 574 to 614 (VDSD…IPHG), 753 to 778 (GDTSPVSPNTSRPQTPVGEDSGVPSK), 831 to 851 (SGKEDGGSVPGVAPVQSTPVS), and 910 to 937 (TVTETAPESRGTTAAHQDASMVSPSNTV). Positions 255-269 (SVLTNSSLSSLSVSS) are enriched in low complexity. Over residues 301-386 (SSAEKEKLRL…KLRVKEEKRK (86 aa)) the composition is skewed to basic and acidic residues. Acidic residues-rich tracts occupy residues 574-586 (VDSDEEWEEEEPG) and 594-608 (GDDEEEGEDEDDDDG). Over residues 756–766 (SPVSPNTSRPQ) the composition is skewed to polar residues.

The protein belongs to the CHAF1A family. Subunit of the CAF-1 complex that contains RBBP4, CHAF1B and CHAF1A. Interacts with CHAF1B, PCNA and RBBP4.

The protein localises to the nucleus. Acts as a component of the histone chaperone complex chromatin assembly factor 1 (CAF-1), which assembles histone octamers onto DNA during replication and repair. CAF-1 performs the first step of the nucleosome assembly process, bringing newly synthesized histones H3 and H4 to replicating DNA; histones H2A/H2B can bind to this chromatin precursor subsequent to DNA replication to complete the histone octamer. This Gallus gallus (Chicken) protein is Chromatin assembly factor 1 subunit A (CHAF1A).